Here is a 104-residue protein sequence, read N- to C-terminus: NADH-quinone oxidoreductase subunit K (104 aa).

3 consecutive transmembrane segments (helical) span residues 4–24 (VPAS…LFGA), 31–51 (VIVL…LVAF), and 67–87 (LFTM…LIAL).

It belongs to the complex I subunit 4L family. In terms of assembly, NDH-1 is composed of 14 different subunits. Subunits NuoA, H, J, K, L, M, N constitute the membrane sector of the complex.

It localises to the cell membrane. It catalyses the reaction a quinone + NADH + 5 H(+)(in) = a quinol + NAD(+) + 4 H(+)(out). In terms of biological role, NDH-1 shuttles electrons from NADH, via FMN and iron-sulfur (Fe-S) centers, to quinones in the respiratory chain. The immediate electron acceptor for the enzyme in this species is believed to be a menaquinone. Couples the redox reaction to proton translocation (for every two electrons transferred, four hydrogen ions are translocated across the cytoplasmic membrane), and thus conserves the redox energy in a proton gradient. This Bacillus cereus (strain Q1) protein is NADH-quinone oxidoreductase subunit K.